The chain runs to 147 residues: Large ribosomal subunit protein uL11 (147 aa).

Belongs to the universal ribosomal protein uL11 family. Part of the ribosomal stalk of the 50S ribosomal subunit. Interacts with L10 and the large rRNA to form the base of the stalk. L10 forms an elongated spine to which L12 dimers bind in a sequential fashion forming a multimeric L10(L12)X complex. One or more lysine residues are methylated.

Its function is as follows. Forms part of the ribosomal stalk which helps the ribosome interact with GTP-bound translation factors. The sequence is that of Large ribosomal subunit protein uL11 from Bacteroides thetaiotaomicron (strain ATCC 29148 / DSM 2079 / JCM 5827 / CCUG 10774 / NCTC 10582 / VPI-5482 / E50).